Consider the following 912-residue polypeptide: Protein translocase subunit SecA (912 aa).

Residues Gln-87, Gly-105–Thr-109, and Asp-508 each bind ATP. Positions Asp-865 to Ser-912 are disordered. Residues Cys-896, Cys-898, Cys-907, and His-908 each coordinate Zn(2+). Residues Lys-902–Ser-912 are compositionally biased toward basic residues.

This sequence belongs to the SecA family. As to quaternary structure, monomer and homodimer. Part of the essential Sec protein translocation apparatus which comprises SecA, SecYEG and auxiliary proteins SecDF-YajC and YidC. Zn(2+) is required as a cofactor.

It localises to the cell inner membrane. The protein resides in the cytoplasm. The catalysed reaction is ATP + H2O + cellular proteinSide 1 = ADP + phosphate + cellular proteinSide 2.. Its function is as follows. Part of the Sec protein translocase complex. Interacts with the SecYEG preprotein conducting channel. Has a central role in coupling the hydrolysis of ATP to the transfer of proteins into and across the cell membrane, serving both as a receptor for the preprotein-SecB complex and as an ATP-driven molecular motor driving the stepwise translocation of polypeptide chains across the membrane. This is Protein translocase subunit SecA from Xanthomonas oryzae pv. oryzae (strain PXO99A).